The chain runs to 466 residues: tRNA modification GTPase MnmE (466 aa).

3 residues coordinate (6S)-5-formyl-5,6,7,8-tetrahydrofolate: Arg24, Glu85, and Lys128. The region spanning 224 to 384 (GLNIVLAGQP…LRTELLHLVG (161 aa)) is the TrmE-type G domain. Asn234 is a K(+) binding site. Residues 234 to 239 (NVGKSS), 253 to 259 (TPIAGTT), and 278 to 281 (DTAG) each bind GTP. Ser238 is a Mg(2+) binding site. Residues Thr253, Ile255, and Thr258 each contribute to the K(+) site. Thr259 lines the Mg(2+) pocket. Lys466 contributes to the (6S)-5-formyl-5,6,7,8-tetrahydrofolate binding site.

This sequence belongs to the TRAFAC class TrmE-Era-EngA-EngB-Septin-like GTPase superfamily. TrmE GTPase family. Homodimer. Heterotetramer of two MnmE and two MnmG subunits. K(+) serves as cofactor.

It localises to the cytoplasm. Its function is as follows. Exhibits a very high intrinsic GTPase hydrolysis rate. Involved in the addition of a carboxymethylaminomethyl (cmnm) group at the wobble position (U34) of certain tRNAs, forming tRNA-cmnm(5)s(2)U34. The sequence is that of tRNA modification GTPase MnmE from Herminiimonas arsenicoxydans.